The following is a 435-amino-acid chain: Xylose isomerase (435 aa).

Residues His-100 and Asp-103 contribute to the active site. The Mg(2+) site is built by Glu-231, Glu-267, His-270, Asp-295, Asp-306, Asp-308, and Asp-338.

It belongs to the xylose isomerase family. As to quaternary structure, homotetramer. Mg(2+) serves as cofactor.

The protein resides in the cytoplasm. It catalyses the reaction alpha-D-xylose = alpha-D-xylulofuranose. The sequence is that of Xylose isomerase from Brucella anthropi (strain ATCC 49188 / DSM 6882 / CCUG 24695 / JCM 21032 / LMG 3331 / NBRC 15819 / NCTC 12168 / Alc 37) (Ochrobactrum anthropi).